The following is a 325-amino-acid chain: MFTSVKKFFGIHEESDEILYNQLISLLEKLTRVITAKDSDKKEVEKLIDKIKNTNLFNQSDENGNTTLILAADAGLEEACLKLIPKMSDEAINMIENIRGQPALVKAMWRDLDSVCIELIPKMSKENINAIDNCGRTLLMLAAKKGMTTVSKMFINLMPPEMIIHADNEGNTTASYADTDHAFADTTKTIKLLQEKLLKSLASFINKSFLKKDHVKKGVDNFFKIVWATKFYKKIKVNKELLASYLQEQNNDPESTNTPESMIKTMNNFIKLHLFAIAGVCKIIQPAFETSSLHLSCLPKEAICCIISHLENEKWGVDAVLLGEN.

3 ANK repeats span residues N63–M94, R99–A130, and C134–I164.

This Rickettsia felis (strain ATCC VR-1525 / URRWXCal2) (Rickettsia azadi) protein is Putative ankyrin repeat protein RF_0011.